The chain runs to 317 residues: tRNA-dihydrouridine(20a/20b) synthase [NAD(P)+]-like (317 aa).

FMN-binding positions include 33 to 35 (PMV) and Gln-87. The active-site Proton donor is Cys-116. Residues Lys-158, His-186, 216–218 (NGD), and 240–241 (AR) each bind FMN.

Belongs to the Dus family. Dus4 subfamily. FMN is required as a cofactor.

The enzyme catalyses 5,6-dihydrouridine(20a) in tRNA + NADP(+) = uridine(20a) in tRNA + NADPH + H(+). It carries out the reaction 5,6-dihydrouridine(20a) in tRNA + NAD(+) = uridine(20a) in tRNA + NADH + H(+). The catalysed reaction is 5,6-dihydrouridine(20b) in tRNA + NAD(+) = uridine(20b) in tRNA + NADH + H(+). It catalyses the reaction 5,6-dihydrouridine(20b) in tRNA + NADP(+) = uridine(20b) in tRNA + NADPH + H(+). Functionally, catalyzes the synthesis of dihydrouridine, a modified base found in the D-loop of most tRNAs. The polypeptide is tRNA-dihydrouridine(20a/20b) synthase [NAD(P)+]-like (DUS4L) (Homo sapiens (Human)).